The chain runs to 440 residues: 2-phosphinomethylmalate synthase (440 aa).

One can recognise a Pyruvate carboxyltransferase domain in the interval 39–313; the sequence is VWLSETTHRD…GARVNLPAVN (275 aa).

This sequence belongs to the alpha-IPM synthase/homocitrate synthase family. As to quaternary structure, homodimer. It depends on Mn(2+) as a cofactor. Requires Co(2+) as cofactor.

The enzyme catalyses 3-(hydrohydroxyphosphoryl)pyruvate + acetyl-CoA + H2O = phosphinomethylmalate + CoA + H(+). It functions in the pathway secondary metabolite biosynthesis; bialaphos biosynthesis. Its activity is regulated as follows. Strongly inhibited by p-chloromercuribenzoate (pCMB), iodoacetamide (IA) and EDTA. In terms of biological role, involved in the biosynthesis of phosphinothricin tripeptide (PTT), also known as bialaphos (BA), a natural-product antibiotic and potent herbicide. Catalyzes the condensation berween phosphinopyruvic acid (PPA), an analog of oxalacetic acid, and acetyl-CoA to form R-2-phosphinomethylmalic acid (PMM). Can also act on oxaloacetate, but shows no activity when acetyl-CoA is substituted by propionyl-CoA or butyryl-CoA. The chain is 2-phosphinomethylmalate synthase from Streptomyces hygroscopicus.